A 450-amino-acid polypeptide reads, in one-letter code: tRNA modification GTPase MnmE (450 aa).

Positions 20, 78, and 117 each coordinate (6S)-5-formyl-5,6,7,8-tetrahydrofolate. Residues 211–372 enclose the TrmE-type G domain; the sequence is GLRMVIVGKP…LEESIYRETQ (162 aa). N221 provides a ligand contact to K(+). GTP is bound by residues 221–226, 240–246, 265–268, 326–329, and 353–355; these read NVGKST, TDIPGTT, DTAG, NKVD, and SAL. Mg(2+) is bound at residue S225. The K(+) site is built by T240, I242, and T245. T246 serves as a coordination point for Mg(2+). K450 lines the (6S)-5-formyl-5,6,7,8-tetrahydrofolate pocket.

Belongs to the TRAFAC class TrmE-Era-EngA-EngB-Septin-like GTPase superfamily. TrmE GTPase family. As to quaternary structure, homodimer. Heterotetramer of two MnmE and two MnmG subunits. The cofactor is K(+).

Its subcellular location is the cytoplasm. Exhibits a very high intrinsic GTPase hydrolysis rate. Involved in the addition of a carboxymethylaminomethyl (cmnm) group at the wobble position (U34) of certain tRNAs, forming tRNA-cmnm(5)s(2)U34. In Thermotoga maritima (strain ATCC 43589 / DSM 3109 / JCM 10099 / NBRC 100826 / MSB8), this protein is tRNA modification GTPase MnmE.